Here is a 721-residue protein sequence, read N- to C-terminus: Polyribonucleotide nucleotidyltransferase (721 aa).

The Mg(2+) site is built by Asp-490 and Asp-496. The 67-residue stretch at 557 to 623 (PRIISIKINP…RIAGLTKEAK (67 aa)) folds into the KH domain. The region spanning 625–693 (GEEYEGTVVK…DRGKIDLIRP (69 aa)) is the S1 motif domain. Residues 693 to 721 (PELEGKIAPREPRAPRGGGDRGPRPPRRD) are disordered.

Belongs to the polyribonucleotide nucleotidyltransferase family. The cofactor is Mg(2+).

It localises to the cytoplasm. The catalysed reaction is RNA(n+1) + phosphate = RNA(n) + a ribonucleoside 5'-diphosphate. Its function is as follows. Involved in mRNA degradation. Catalyzes the phosphorolysis of single-stranded polyribonucleotides processively in the 3'- to 5'-direction. In Deinococcus deserti (strain DSM 17065 / CIP 109153 / LMG 22923 / VCD115), this protein is Polyribonucleotide nucleotidyltransferase.